The primary structure comprises 1096 residues: Lysine-specific demethylase PHF2 (1096 aa).

A PHD-type zinc finger spans residues 5-56 (PVYCVCRLPYDVTRFMIECDACKDWFHGSCVGVEEEEAPDIDIYHCPNCEKT). Threonine 193 and threonine 246 together coordinate 2-oxoglutarate. One can recognise a JmjC domain in the interval 197-353 (FSDTRMSSFV…MQMRAYEVER (157 aa)). Fe cation contacts are provided by histidine 249 and aspartate 251. 2-oxoglutarate-binding residues include tyrosine 259, lysine 266, tyrosine 321, and threonine 323. A Fe cation-binding site is contributed by tyrosine 321. 2 disordered regions span residues 447–634 (KAVR…KDNK) and 646–674 (GSKA…KPVR). Serine 474 bears the Phosphoserine mark. A Phosphothreonine modification is found at threonine 479. Positions 503–518 (SKIPKPPKPPKPPRPP) are enriched in pro residues. Serine 539 carries the post-translational modification Phosphoserine. Composition is skewed to basic and acidic residues over residues 548–563 (LEAH…EPPK) and 578–624 (DVVH…KLEK). At serine 655 the chain carries Phosphoserine. Residues 665–674 (FKEDKPKPVR) show a composition bias toward basic and acidic residues. Phosphoserine is present on residues serine 681 and serine 705. A Glycyl lysine isopeptide (Lys-Gly) (interchain with G-Cter in SUMO2) cross-link involves residue lysine 711. Disordered stretches follow at residues 719–799 (TKPK…QGML), 817–846 (AGQA…KRLL), and 877–1078 (YPSL…MATA). Lysine 720 bears the N6-acetyllysine mark. Tyrosine 728 carries the post-translational modification Phosphotyrosine. A compositionally biased stretch (basic and acidic residues) spans 729-757 (KSDDSSDEGSLHIDTDTKPGRNARVKKES). 4 positions are modified to phosphoserine: serine 730, serine 733, serine 734, and serine 738. Serine 879, serine 882, and serine 899 each carry phosphoserine. Basic and acidic residues predominate over residues 916-925 (RQDRPVREGT). Over residues 949–959 (SKKKKSAKRKL) the composition is skewed to basic residues. Low complexity-rich tracts occupy residues 960-1009 (TPNT…EGSS) and 1027-1040 (TAAG…AGRT). Residues 1053 to 1065 (RRPSASSPNNNTA) show a composition bias toward polar residues. Serine 1056 carries the post-translational modification Phosphoserine; by PKA.

It belongs to the JHDM1 histone demethylase family. JHDM1D subfamily. As to quaternary structure, component of the PHF2-ARID5B complex, at least composed of PHF2 and ARID5B. Interacts with HNF4A and NR1H4. Interacts with RELA. Phosphorylated by PKA on specific serine residues, leading to the formation of an active lysine demethylase complex. Widely expressed, including in liver (at protein level).

The protein resides in the nucleus. Its subcellular location is the nucleolus. The protein localises to the chromosome. It localises to the centromere. It is found in the kinetochore. The catalysed reaction is N(6),N(6)-dimethyl-L-lysyl(9)-[histone H3] + 2-oxoglutarate + O2 = N(6)-methyl-L-lysyl(9)-[histone H3] + formaldehyde + succinate + CO2. With respect to regulation, enzymatically inactive by itself, and become active following phosphorylation by PKA. Its function is as follows. Lysine demethylase that demethylates both histones and non-histone proteins. Enzymatically inactive by itself, and becomes active following phosphorylation by PKA: forms a complex with ARID5B and mediates demethylation of methylated ARID5B. Demethylation of ARID5B leads to target the PHF2-ARID5B complex to target promoters, where PHF2 mediates demethylation of dimethylated 'Lys-9' of histone H3 (H3K9me2), followed by transcription activation of target genes. The PHF2-ARID5B complex acts as a coactivator of HNF4A in liver. PHF2 is recruited to trimethylated 'Lys-4' of histone H3 (H3K4me3) at rDNA promoters and promotes expression of rDNA. Involved in the activation of toll-like receptor 4 (TLR4)-target inflammatory genes in macrophages by catalyzing the demethylation of trimethylated histone H4 lysine 20 (H4K20me3) at the gene promoters. The protein is Lysine-specific demethylase PHF2 of Homo sapiens (Human).